The chain runs to 129 residues: Large ribosomal subunit protein uL22 (129 aa).

It belongs to the universal ribosomal protein uL22 family. In terms of assembly, part of the 50S ribosomal subunit.

This protein binds specifically to 23S rRNA; its binding is stimulated by other ribosomal proteins, e.g. L4, L17, and L20. It is important during the early stages of 50S assembly. It makes multiple contacts with different domains of the 23S rRNA in the assembled 50S subunit and ribosome. Its function is as follows. The globular domain of the protein is located near the polypeptide exit tunnel on the outside of the subunit, while an extended beta-hairpin is found that lines the wall of the exit tunnel in the center of the 70S ribosome. The chain is Large ribosomal subunit protein uL22 from Brucella abortus (strain 2308).